Consider the following 203-residue polypeptide: Glycerol-3-phosphate acyltransferase (203 aa).

5 helical membrane passes run 5 to 25, 55 to 75, 88 to 108, 114 to 134, and 162 to 182; these read VLGLVLVAAGYLAGSIPFGVV, KLGIAVLLLDAAKAIVPILVA, FTVLVALAAFVGHLYPVWLGF, VATGLGIFLVLSPWAALAGAV, and FVAHGWTSPVSWAGLALAALI.

Belongs to the PlsY family. In terms of assembly, probably interacts with PlsX.

It localises to the cell inner membrane. The catalysed reaction is an acyl phosphate + sn-glycerol 3-phosphate = a 1-acyl-sn-glycero-3-phosphate + phosphate. Its pathway is lipid metabolism; phospholipid metabolism. Functionally, catalyzes the transfer of an acyl group from acyl-phosphate (acyl-PO(4)) to glycerol-3-phosphate (G3P) to form lysophosphatidic acid (LPA). This enzyme utilizes acyl-phosphate as fatty acyl donor, but not acyl-CoA or acyl-ACP. The sequence is that of Glycerol-3-phosphate acyltransferase from Anaeromyxobacter sp. (strain Fw109-5).